Here is a 1226-residue protein sequence, read N- to C-terminus: DNA-directed RNA polymerase subunit beta (1226 aa).

This sequence belongs to the RNA polymerase beta chain family. In terms of assembly, the RNAP catalytic core consists of 2 alpha, 1 beta, 1 beta' and 1 omega subunit. When a sigma factor is associated with the core the holoenzyme is formed, which can initiate transcription.

The enzyme catalyses RNA(n) + a ribonucleoside 5'-triphosphate = RNA(n+1) + diphosphate. In terms of biological role, DNA-dependent RNA polymerase catalyzes the transcription of DNA into RNA using the four ribonucleoside triphosphates as substrates. This is DNA-directed RNA polymerase subunit beta from Leptospira interrogans serogroup Icterohaemorrhagiae serovar Lai (strain 56601).